The primary structure comprises 443 residues: 26S proteasome regulatory subunit 4 homolog A (443 aa).

Disordered regions lie at residues 1–55 (MGQG…LPTV) and 87–108 (RLKPQEEKAEEDRSKVDDLRGT). Composition is skewed to basic and acidic residues over residues 12–28 (QGDRKPDGGDKKEKKFE) and 87–106 (RLKPQEEKAEEDRSKVDDLR). 229 to 236 (GEPGTGKT) lines the ATP pocket. Glycyl lysine isopeptide (Lys-Gly) (interchain with G-Cter in ubiquitin) cross-links involve residues lysine 296 and lysine 433.

The protein belongs to the AAA ATPase family. Component of the 19S regulatory particle (RP/PA700) base subcomplex of the 26S proteasome. The 26S proteasome is composed of a core protease (CP), known as the 20S proteasome, capped at one or both ends by the 19S regulatory particle (RP/PA700). The RP/PA700 complex is composed of at least 17 different subunits in two subcomplexes, the base and the lid, which form the portions proximal and distal to the 20S proteolytic core, respectively. Required for innate immunity. Interacts with UNI. As to expression, preferentially expressed in the root and shoot apical meristem.

It is found in the cytoplasm. It localises to the P-body. Its subcellular location is the nucleus. Its function is as follows. The 26S protease is involved in the ATP-dependent degradation of ubiquitinated proteins. The regulatory (or ATPase) complex confers ATP dependency and substrate specificity to the 26S complex. Interacts with transit peptides of proteins targeted to the chloroplast, and may be involved in the degradation of unimported plastid protein precursors. Is required for the maintenance of postembryonic root and shoot meristems. Has a specific role in the regulation of organs size. Acts redundantly with RPT2B in the regulation of gametogenesis. With RPT2B plays a critical role in 26S proteasome assembly. Acts as an upstream signaling component for inducing both defense and morphological phenotypes in the constitutive active uni-1D mutant. Acts as a negative regulator of endoreduplication in trichome cells. May function after the completion of the third endoreduplication step (8C to 16C) mediated by RHL1. Acts as a negative regulator of transcriptional gene silencing (TGS) at specific endogenous genes through DNA methylation. Promotes post-transcriptional gene silencing (PTGS) by limiting the degradation of transgene aberrant RNAs by the RNA quality control (RQC) machinery, thus favoring their entry into cytoplasmic siRNA bodies where they can trigger PTGS. Involved in tolerance to zinc deficiency, possibly through alleviation of oxidative stresses or processing of poly-ubiquitinated proteins. Required for resistance to the fungal pathogen Golovinomyces cichoracearum. This is 26S proteasome regulatory subunit 4 homolog A from Arabidopsis thaliana (Mouse-ear cress).